Consider the following 337-residue polypeptide: Anthranilate phosphoribosyltransferase (337 aa).

5-phospho-alpha-D-ribose 1-diphosphate is bound by residues G81, G84–D85, S89, N91–T94, K109–S117, and A121. G81 is a binding site for anthranilate. Position 93 (S93) interacts with Mg(2+). N112 provides a ligand contact to anthranilate. R167 lines the anthranilate pocket. Mg(2+) contacts are provided by D226 and E227.

Belongs to the anthranilate phosphoribosyltransferase family. Homodimer. Mg(2+) is required as a cofactor.

The enzyme catalyses N-(5-phospho-beta-D-ribosyl)anthranilate + diphosphate = 5-phospho-alpha-D-ribose 1-diphosphate + anthranilate. The protein operates within amino-acid biosynthesis; L-tryptophan biosynthesis; L-tryptophan from chorismate: step 2/5. In terms of biological role, catalyzes the transfer of the phosphoribosyl group of 5-phosphorylribose-1-pyrophosphate (PRPP) to anthranilate to yield N-(5'-phosphoribosyl)-anthranilate (PRA). In Methylorubrum extorquens (strain CM4 / NCIMB 13688) (Methylobacterium extorquens), this protein is Anthranilate phosphoribosyltransferase.